A 217-amino-acid polypeptide reads, in one-letter code: Somatotropin (217 aa).

Residues 1–24 (MAAGSWTSLLLAFTLLCLPQLREA) form the signal peptide. Histidine 44 lines the Zn(2+) pocket. The cysteines at positions 79 and 191 are disulfide-linked. Serine 132 bears the Phosphoserine mark. A Zn(2+)-binding site is contributed by glutamate 200. Cysteine 208 and cysteine 215 form a disulfide bridge.

This sequence belongs to the somatotropin/prolactin family.

Its subcellular location is the secreted. In terms of biological role, plays an important role in growth control. Its major role in stimulating body growth is to stimulate the liver and other tissues to secrete IGF1. It stimulates both the differentiation and proliferation of myoblasts. It also stimulates amino acid uptake and protein synthesis in muscle and other tissues. The polypeptide is Somatotropin (GH1) (Callithrix jacchus (White-tufted-ear marmoset)).